Here is a 231-residue protein sequence, read N- to C-terminus: Large ribosomal subunit protein uL1 (231 aa).

It belongs to the universal ribosomal protein uL1 family. Part of the 50S ribosomal subunit.

Binds directly to 23S rRNA. The L1 stalk is quite mobile in the ribosome, and is involved in E site tRNA release. Its function is as follows. Protein L1 is also a translational repressor protein, it controls the translation of the L11 operon by binding to its mRNA. This Saccharophagus degradans (strain 2-40 / ATCC 43961 / DSM 17024) protein is Large ribosomal subunit protein uL1.